Consider the following 318-residue polypeptide: 2-keto-3-deoxygluconate permease (318 aa).

10 helical membrane-spanning segments follow: residues 10-30, 42-62, 76-96, 105-125, 139-159, 163-183, 199-219, 224-244, 263-283, and 289-309; these read IPGG…TFTP, GLIT…GASI, VLVV…GTFL, MLAG…NGGL, AGAF…VILG, IATF…IGFA, VQTL…LSVI, FAGI…LILA, AGAA…FAPV, and ALVA…TALW.

Belongs to the KdgT transporter family.

It is found in the cell inner membrane. The catalysed reaction is 2-dehydro-3-deoxy-D-gluconate(in) + H(+)(in) = 2-dehydro-3-deoxy-D-gluconate(out) + H(+)(out). Its function is as follows. Catalyzes the proton-dependent uptake of 2-keto-3-deoxygluconate (KDG) into the cell. This chain is 2-keto-3-deoxygluconate permease, found in Pectobacterium carotovorum subsp. carotovorum (Erwinia carotovora subsp. carotovora).